We begin with the raw amino-acid sequence, 827 residues long: Leucine--tRNA ligase (827 aa).

A 'HIGH' region motif is present at residues 42–52; that stretch reads PYPSGKLHMGH. Residues 581–585 carry the 'KMSKS' region motif; sequence KMSKS. Lys-584 provides a ligand contact to ATP.

The protein belongs to the class-I aminoacyl-tRNA synthetase family.

Its subcellular location is the cytoplasm. It catalyses the reaction tRNA(Leu) + L-leucine + ATP = L-leucyl-tRNA(Leu) + AMP + diphosphate. The sequence is that of Leucine--tRNA ligase from Desulforamulus reducens (strain ATCC BAA-1160 / DSM 100696 / MI-1) (Desulfotomaculum reducens).